The following is a 154-amino-acid chain: Transcriptional repressor NrdR (154 aa).

A zinc finger lies at 3–34 (CPFCSAHDTKVIDSRLVAEGDQVRRRRECQAC). In terms of domain architecture, ATP-cone spans 49–139 (PRVIKQDGSR…VYRRFQDLNE (91 aa)).

The protein belongs to the NrdR family. Zn(2+) serves as cofactor.

In terms of biological role, negatively regulates transcription of bacterial ribonucleotide reductase nrd genes and operons by binding to NrdR-boxes. In Azotobacter vinelandii (strain DJ / ATCC BAA-1303), this protein is Transcriptional repressor NrdR.